We begin with the raw amino-acid sequence, 180 residues long: Negative modulator of initiation of replication (180 aa).

Interaction with DNA regions lie at residues 86–87 (AV), 115–119 (RTRVY), and 149–155 (NTNTGRK).

Belongs to the SeqA family. As to quaternary structure, homodimer. Polymerizes to form helical filaments.

It is found in the cytoplasm. Functionally, negative regulator of replication initiation, which contributes to regulation of DNA replication and ensures that replication initiation occurs exactly once per chromosome per cell cycle. Binds to pairs of hemimethylated GATC sequences in the oriC region, thus preventing assembly of replication proteins and re-initiation at newly replicated origins. Repression is relieved when the region becomes fully methylated. This chain is Negative modulator of initiation of replication, found in Enterobacter sp. (strain 638).